The sequence spans 122 residues: Acidic phospholipase A2 (122 aa).

Intrachain disulfides connect Cys-26–Cys-115, Cys-28–Cys-44, Cys-43–Cys-95, Cys-49–Cys-122, Cys-50–Cys-88, Cys-57–Cys-81, and Cys-75–Cys-86. Ca(2+) is bound by residues Tyr-27, Gly-29, and Gly-31. His-47 is a catalytic residue. Asp-48 serves as a coordination point for Ca(2+). Residue Asp-89 is part of the active site.

Requires Ca(2+) as cofactor. As to expression, expressed by the venom gland.

It is found in the secreted. The enzyme catalyses a 1,2-diacyl-sn-glycero-3-phosphocholine + H2O = a 1-acyl-sn-glycero-3-phosphocholine + a fatty acid + H(+). In terms of biological role, PLA2 catalyzes the calcium-dependent hydrolysis of the 2-acyl groups in 3-sn-phosphoglycerides. The protein is Acidic phospholipase A2 of Lachesis stenophrys (Central American bushmaster).